Here is a 100-residue protein sequence, read N- to C-terminus: Small ribosomal subunit protein bS20 (100 aa).

Positions 79–100 are disordered; it reads AAHQKSRLSAAVKQAIEPAPST.

Belongs to the bacterial ribosomal protein bS20 family.

Its function is as follows. Binds directly to 16S ribosomal RNA. The polypeptide is Small ribosomal subunit protein bS20 (Prochlorococcus marinus (strain MIT 9303)).